Consider the following 369-residue polypeptide: MESYDAIVIGGGPAGAASALSLLTHHNKRVLLLERGDFSQARIGEQVSHSIFDFLAYLDLPVSEFGESCFSPNYGKTSLWGSSIESHHLSMFATQGATYQLDRAAFDETLLMAFVERGGTVIPRCKQMKIEQSDSVWQVQFVHPEQGEQTVCCDYLVDASGRQSKLSAMLGVEPVMDDQLVGVGAFIRNPDNAFEQHQRIESCEYGWWYMAGLSSELAVVTCFTDMDIMREMRLNKASVWNQYLAETSAIADCVKGSETTHPKLWVKQAHSQYCTSELPDRFIAVGDAALSFDPVSSMGIGFAMTSACHSTRALVSDSKDAVLQYQQDMARIYQEYHVTKTRIYQREKRWPNQLFWQRRHAFSALQHAS.

FAD-binding positions include 10–14 and Arg-103; that span reads GGGPA.

The cofactor is FAD.

The protein localises to the cytoplasm. Is required for lysine-epsilon oxidase (LOD) activity in M.mediterranea. May be involved in the generation of the quinonic cofactor of LodA, leading to the active form of LodA containing a tyrosine-derived quinone cofactor. The polypeptide is Putative FAD-dependent oxidoreductase LodB (lodB) (Marinomonas mediterranea (strain ATCC 700492 / JCM 21426 / NBRC 103028 / MMB-1)).